The primary structure comprises 281 residues: Formamidopyrimidine-DNA glycosylase (281 aa).

Residue Pro-2 is the Schiff-base intermediate with DNA of the active site. The active-site Proton donor is the Glu-3. The active-site Proton donor; for beta-elimination activity is Lys-58. DNA contacts are provided by His-94, Arg-113, and Arg-156. The FPG-type; degenerate zinc-finger motif lies at 241 to 281; sequence AVYDRVGQPCPGCDCDVARTGGIERMVQSGRSTFFCGRRQR. Arg-271 functions as the Proton donor; for delta-elimination activity in the catalytic mechanism.

The protein belongs to the FPG family. In terms of assembly, monomer. Zn(2+) is required as a cofactor.

The catalysed reaction is Hydrolysis of DNA containing ring-opened 7-methylguanine residues, releasing 2,6-diamino-4-hydroxy-5-(N-methyl)formamidopyrimidine.. The enzyme catalyses 2'-deoxyribonucleotide-(2'-deoxyribose 5'-phosphate)-2'-deoxyribonucleotide-DNA = a 3'-end 2'-deoxyribonucleotide-(2,3-dehydro-2,3-deoxyribose 5'-phosphate)-DNA + a 5'-end 5'-phospho-2'-deoxyribonucleoside-DNA + H(+). Involved in base excision repair of DNA damaged by oxidation or by mutagenic agents. Acts as a DNA glycosylase that recognizes and removes damaged bases. Has a preference for oxidized purines, such as 7,8-dihydro-8-oxoguanine (8-oxoG). Has AP (apurinic/apyrimidinic) lyase activity and introduces nicks in the DNA strand. Cleaves the DNA backbone by beta-delta elimination to generate a single-strand break at the site of the removed base with both 3'- and 5'-phosphates. The chain is Formamidopyrimidine-DNA glycosylase from Rhodospirillum rubrum (strain ATCC 11170 / ATH 1.1.1 / DSM 467 / LMG 4362 / NCIMB 8255 / S1).